The sequence spans 304 residues: Ribonuclease Z (304 aa).

His-63, His-65, Asp-67, His-68, His-143, Asp-213, and His-271 together coordinate Zn(2+). The Proton acceptor role is filled by Asp-67.

This sequence belongs to the RNase Z family. As to quaternary structure, homodimer. The cofactor is Zn(2+).

The enzyme catalyses Endonucleolytic cleavage of RNA, removing extra 3' nucleotides from tRNA precursor, generating 3' termini of tRNAs. A 3'-hydroxy group is left at the tRNA terminus and a 5'-phosphoryl group is left at the trailer molecule.. Functionally, zinc phosphodiesterase, which displays some tRNA 3'-processing endonuclease activity. Probably involved in tRNA maturation, by removing a 3'-trailer from precursor tRNA. The polypeptide is Ribonuclease Z (Porphyromonas gingivalis (strain ATCC 33277 / DSM 20709 / CIP 103683 / JCM 12257 / NCTC 11834 / 2561)).